The following is a 619-amino-acid chain: CREB-regulated transcription coactivator 3 (619 aa).

Phosphoserine is present on residues Ser-4 and Ser-62. The tract at residues 129–148 (SQHLDESWPRQQPPWKEEKH) is disordered. Position 160 is a phosphothreonine (Thr-160). Ser-162 is subject to Phosphoserine; by SIK2. A Glycyl lysine isopeptide (Lys-Gly) (interchain with G-Cter in SUMO2) cross-link involves residue Lys-232. Phosphoserine is present on residues Ser-273, Ser-329, Ser-332, Ser-370, Ser-391, Ser-396, and Ser-410. Residues 375-478 (STTNLSGPSR…TQQPQAAPSL (104 aa)) are disordered. The tract at residues 380-401 (SGPSRRRQPPVSPLTLSPGPEA) is required for interaction with PPP2CA and PPP2R1A. 2 stretches are compositionally biased toward polar residues: residues 405–415 (FSRQLSATSPL) and 422–431 (QMVTSEQSPL). Ser-443 is subject to Phosphoserine. The segment covering 443 to 454 (SPPPPYPTPQEL) has biased composition (pro residues). Over residues 455–478 (PQPLLQQPHAQEPPTQQPQAAPSL) the composition is skewed to low complexity.

The protein belongs to the TORC family. As to quaternary structure, binding, as a tetramer, through its N-terminal region, with the bZIP domain of CREB1 enhances recruitment of TAF4 to the promoter. 'Arg-314' in the bZIP domain of CREB1 is essential for this interaction. Interacts (when phosphorylated at Ser-162 and Se-273) with 14-3-3 proteins. Interacts with YWHAE. Interacts (when phosphorylated at Ser-391) with phosphatase PP2A catalytic subunit PPP2CA and regulatory subunits PPP2R1A and PPP2R2A. In terms of processing, phosphorylation/dephosphorylation states of Ser-273 are required for regulating transduction of CREB activity. CRTCs/TORCs are inactive when phosphorylated, and active when dephosphorylated at this site. May be phosphorylated at Ser-391 by MAPK3/ERK1 and/or MAPK1/ERK2 or by some cyclin-dependent kinases such as CDK1,CDK2 or CDK5. Following adenylyl cyclase activation, dephosphorylated at Ser-162 and Ser-273 resulting in its dissociation from 14-3-3 proteins probably promoting CRTC3 translocation into the nucleus. As to expression, expressed in brown adipose tissues.

The protein localises to the nucleus. Its subcellular location is the cytoplasm. Its function is as follows. Transcriptional coactivator for CREB1 which activates transcription through both consensus and variant cAMP response element (CRE) sites. Acts as a coactivator, in the SIK/TORC signaling pathway, being active when dephosphorylated. Acts independently of CREB1 'Ser-133' phosphorylation. Enhances the interaction of CREB1 with TAF4. Regulates the expression of specific CREB-activated genes such as the steroidogenic gene, StAR. Potent coactivator of PPARGC1A and inducer of mitochondrial biogenesis in muscle cells. The polypeptide is CREB-regulated transcription coactivator 3 (Crtc3) (Mus musculus (Mouse)).